A 591-amino-acid chain; its full sequence is Aspartate--tRNA ligase (591 aa).

Glutamate 172 serves as a coordination point for L-aspartate. An aspartate region spans residues 196–199; the sequence is QLFK. Arginine 218 is an L-aspartate binding site. Residues 218–220 and glutamine 227 each bind ATP; that span reads RDE. Histidine 449 serves as a coordination point for L-aspartate. An ATP-binding site is contributed by glutamate 483. Residue arginine 490 coordinates L-aspartate. Position 535 to 538 (535 to 538) interacts with ATP; that stretch reads GLDR.

Belongs to the class-II aminoacyl-tRNA synthetase family. Type 1 subfamily. As to quaternary structure, homodimer.

It localises to the cytoplasm. The enzyme catalyses tRNA(Asp) + L-aspartate + ATP = L-aspartyl-tRNA(Asp) + AMP + diphosphate. Catalyzes the attachment of L-aspartate to tRNA(Asp) in a two-step reaction: L-aspartate is first activated by ATP to form Asp-AMP and then transferred to the acceptor end of tRNA(Asp). The polypeptide is Aspartate--tRNA ligase (Actinobacillus pleuropneumoniae serotype 7 (strain AP76)).